The chain runs to 162 residues: Interleukin-15 (162 aa).

Positions 1-29 are cleaved as a signal peptide; it reads MKILKPYMRNTSISCYLCFLLNSHFLTEA. A propeptide spanning residues 30 to 48 is cleaved from the precursor; sequence GIHVFILGCVSVGLPKTEA. Disulfide bonds link C83–C133 and C90–C136. N-linked (GlcNAc...) asparagine glycans are attached at residues N104, N108, and N119.

Belongs to the IL-15/IL-21 family.

It localises to the secreted. Functionally, cytokine that plays a major role in the development of inflammatory and protective immune responses to microbial invaders and parasites by modulating immune cells of both the innate and adaptive immune systems. Stimulates the proliferation and activation of natural killer cells, T-cells and B-cells and promotes the secretion of several cytokines. In monocytes, induces the production of IL8 and monocyte chemotactic protein 1/CCL2, two chemokines that attract neutrophils and monocytes respectively to sites of infection. Unlike most cytokines, which are secreted in soluble form, IL15 is expressed in association with its high affinity IL15RA on the surface of IL15-producing cells and delivers signals to target cells that express IL2RB and IL2RG receptor subunits. Binding to its receptor triggers the phosphorylation of JAK1 and JAK3 and the recruitment and subsequent phosphorylation of signal transducer and activator of transcription-3/STAT3 and STAT5. In mast cells, induces the rapid tyrosine phosphorylation of STAT6 and thereby controls mast cell survival and release of cytokines such as IL4. This chain is Interleukin-15 (Il15), found in Mus musculus (Mouse).